Here is a 381-residue protein sequence, read N- to C-terminus: Chitin deacetylase 8 (381 aa).

Positions 1–18 (MKRLSVLCSLLLVAAALG) are cleaved as a signal peptide. Cystine bridges form between C27-C39 and C32-C37. The Zn(2+) site is built by D63, H117, and H121. Disulfide bonds link C86–C335, C211–C216, C240–C246, C343–C365, and C348–C368. N171 carries N-linked (GlcNAc...) asparagine glycosylation.

It belongs to the carbohydrate esterase 4 (CE4) family. It depends on Zn(2+) as a cofactor. In terms of tissue distribution, strongly expressed in the midgut. Has little or no expression in other tissues tested.

It is found in the secreted. The catalysed reaction is [(1-&gt;4)-N-acetyl-beta-D-glucosaminyl](n) + n H2O = chitosan + n acetate. In terms of biological role, hydrolyzes the N-acetamido groups of N-acetyl-D-glucosamine (GlcNAc) residues in chitin. Shows activity towards the chitinous oligomers GlcNAc(3), GlcNAc(4), GlcNAc(5) and GlcNAc(6), but not GlcNAc or GlcNAc(2). Requires the substrate to occupy subsites 0, +1, and +2 for optimum catalysis. The polypeptide is Chitin deacetylase 8 (Bombyx mori (Silk moth)).